The sequence spans 525 residues: ATP synthase subunit alpha (525 aa).

171 to 178 (GDRQTGKS) is a binding site for ATP.

Belongs to the ATPase alpha/beta chains family. In terms of assembly, F-type ATPases have 2 components, CF(1) - the catalytic core - and CF(0) - the membrane proton channel. CF(1) has five subunits: alpha(3), beta(3), gamma(1), delta(1), epsilon(1). CF(0) has three main subunits: a(1), b(2) and c(9-12). The alpha and beta chains form an alternating ring which encloses part of the gamma chain. CF(1) is attached to CF(0) by a central stalk formed by the gamma and epsilon chains, while a peripheral stalk is formed by the delta and b chains.

It localises to the cell inner membrane. The enzyme catalyses ATP + H2O + 4 H(+)(in) = ADP + phosphate + 5 H(+)(out). Produces ATP from ADP in the presence of a proton gradient across the membrane. The alpha chain is a regulatory subunit. In Flavobacterium psychrophilum (strain ATCC 49511 / DSM 21280 / CIP 103535 / JIP02/86), this protein is ATP synthase subunit alpha.